A 525-amino-acid chain; its full sequence is Glucose-6-phosphate isomerase (525 aa).

Glu356 acts as the Proton donor in catalysis. Active-site residues include His387 and Lys502.

The protein belongs to the GPI family.

Its subcellular location is the cytoplasm. The enzyme catalyses alpha-D-glucose 6-phosphate = beta-D-fructose 6-phosphate. It functions in the pathway carbohydrate biosynthesis; gluconeogenesis. The protein operates within carbohydrate degradation; glycolysis; D-glyceraldehyde 3-phosphate and glycerone phosphate from D-glucose: step 2/4. In terms of biological role, catalyzes the reversible isomerization of glucose-6-phosphate to fructose-6-phosphate. The protein is Glucose-6-phosphate isomerase of Treponema denticola (strain ATCC 35405 / DSM 14222 / CIP 103919 / JCM 8153 / KCTC 15104).